Consider the following 592-residue polypeptide: Autophagy-related protein 22-1 (592 aa).

Transmembrane regions (helical) follow at residues 31–51 (YGWAAEVFVVCAMGSFLPITL), 108–128 (TASFALYTFSLSVLVQAVIII), 143–163 (LLIVFAFIGSIATMLFLVVVP), and 167–187 (LLGGLLAIISNTCFGASFVLL). Residue Asn-213 is glycosylated (N-linked (GlcNAc...) asparagine). A run of 8 helical transmembrane segments spans residues 271–291 (IGIGYIGAVILQVISILVVVV), 301–321 (LVLFLIGLWWFVFTIPASLWL), 364–384 (IVIFLAAWFLLSDGIATVSGT), 398–418 (AALGLINVIVMLAGVFGAFSW), 433–453 (IIACIILFELIPLYGLLGFIP), 468–490 (MYPLGALYGLVMGGLSSYCRSFF), 502–524 (FYALYAITDKGSSIFGPAIVGAI), and 534–554 (AFVFLAVLIFVPLPLMLLVDV). The segment at 572–592 (PQGSEYGAISDDQTTEDPIEE) is disordered.

The protein belongs to the ATG22 family.

The protein localises to the vacuole membrane. In terms of biological role, vacuolar effluxer which mediate the efflux of amino acids resulting from autophagic degradation. The release of autophagic amino acids allows the maintenance of protein synthesis and viability during nitrogen starvation. The sequence is that of Autophagy-related protein 22-1 (atg22-1) from Penicillium rubens (strain ATCC 28089 / DSM 1075 / NRRL 1951 / Wisconsin 54-1255) (Penicillium chrysogenum).